The sequence spans 54 residues: Potassium channel toxin alpha-KTx 14.3 (54 aa).

The signal sequence occupies residues 1–23 (MKIFFAILLILAVCSMAIWTVNG).

This sequence belongs to the short scorpion toxin superfamily. Potassium channel inhibitor family. Alpha-KTx 14 subfamily. Contains 3 disulfide bridges. As to expression, expressed by the venom gland.

The protein localises to the secreted. Its function is as follows. Potential blocker of potassium channels. The protein is Potassium channel toxin alpha-KTx 14.3 of Olivierus martensii (Manchurian scorpion).